Reading from the N-terminus, the 578-residue chain is Membrane protein insertase YidC (578 aa).

The chain crosses the membrane as a helical span at residues 3–23 (IQRSILIVALAVVSYLLVLQW). Residues 34-71 (AASASMNTTQGLPDTPSAAGTSSDVPTAQSGAAGSEAA) form a disordered region. Over residues 37–65 (ASMNTTQGLPDTPSAAGTSSDVPTAQSGA) the composition is skewed to polar residues. Transmembrane regions (helical) follow at residues 361 to 381 (LELTVDYGFLWFIAQPIFWLL), 387 to 407 (LIGNWGWSIIALTVLIKLAFF), 457 to 477 (LGGCLPILVQMPVFLSLYWVL), 500 to 520 (PFFILPIVMGGTMLIQQMLNP), and 535 to 555 (PIIFTFFFLWFPAGLVLYWVV).

The protein belongs to the OXA1/ALB3/YidC family. Type 1 subfamily. In terms of assembly, interacts with the Sec translocase complex via SecD. Specifically interacts with transmembrane segments of nascent integral membrane proteins during membrane integration.

It is found in the cell inner membrane. Required for the insertion and/or proper folding and/or complex formation of integral membrane proteins into the membrane. Involved in integration of membrane proteins that insert both dependently and independently of the Sec translocase complex, as well as at least some lipoproteins. Aids folding of multispanning membrane proteins. This Pseudomonas paraeruginosa (strain DSM 24068 / PA7) (Pseudomonas aeruginosa (strain PA7)) protein is Membrane protein insertase YidC.